Reading from the N-terminus, the 149-residue chain is Transcriptional repressor NrdR (149 aa).

The segment at 3-34 is a zinc-finger region; the sequence is CPFCSENDTKVIDSRLVADGHQVRRRRQCLAC. Positions 49–139 constitute an ATP-cone domain; sequence PKVIKSNGNR…VYRSFEDIRE (91 aa).

It belongs to the NrdR family. Requires Zn(2+) as cofactor.

In terms of biological role, negatively regulates transcription of bacterial ribonucleotide reductase nrd genes and operons by binding to NrdR-boxes. In Vibrio parahaemolyticus serotype O3:K6 (strain RIMD 2210633), this protein is Transcriptional repressor NrdR.